A 349-amino-acid chain; its full sequence is MEFTLEEIAHLLGGEVKGDGKAKVSSIAKIEEASSGSISFLSNPKYESFIYSTNASAVIVKKDFQPRESLKTSLILVDDPYTSFTTILEAYQQALNASKMGKEEPSFIGKNAVIGSNHYIGAFAYIGSNCKIGNNVKIYPQAYIGDNVTIGDNTTIYAGVKIYANCELGNQVTIHSGCVIGSDGFGFAPQADGTYKTIPQIGNVVIGNHVDIGANTVIDCATMGSTIIYDGVKIDNLIQIAHNVKIGKNTVIAAQAGISGSTTIGENCIIAGQVGIIGHIKIANKTTIAAQAGIGRTISEEGLTLLGSPAIEKLDFLKSFAIYRKLPTLQKRIEELEEKTLNLSGIKES.

Residue histidine 242 is the Proton acceptor of the active site.

The protein belongs to the transferase hexapeptide repeat family. LpxD subfamily. As to quaternary structure, homotrimer.

It catalyses the reaction a UDP-3-O-[(3R)-3-hydroxyacyl]-alpha-D-glucosamine + a (3R)-hydroxyacyl-[ACP] = a UDP-2-N,3-O-bis[(3R)-3-hydroxyacyl]-alpha-D-glucosamine + holo-[ACP] + H(+). It participates in bacterial outer membrane biogenesis; LPS lipid A biosynthesis. Catalyzes the N-acylation of UDP-3-O-acylglucosamine using 3-hydroxyacyl-ACP as the acyl donor. Is involved in the biosynthesis of lipid A, a phosphorylated glycolipid that anchors the lipopolysaccharide to the outer membrane of the cell. The polypeptide is UDP-3-O-acylglucosamine N-acyltransferase (Cytophaga hutchinsonii (strain ATCC 33406 / DSM 1761 / CIP 103989 / NBRC 15051 / NCIMB 9469 / D465)).